Reading from the N-terminus, the 189-residue chain is Thymidine kinase (189 aa).

ATP contacts are provided by residues 9–16 (GTMNSGKT) and 85–88 (DESQ). Glutamate 86 functions as the Proton acceptor in the catalytic mechanism. Zn(2+) is bound by residues cysteine 143, cysteine 146, cysteine 180, and histidine 183.

The protein belongs to the thymidine kinase family. As to quaternary structure, homotetramer.

It localises to the cytoplasm. The catalysed reaction is thymidine + ATP = dTMP + ADP + H(+). The polypeptide is Thymidine kinase (Streptococcus pyogenes serotype M18 (strain MGAS8232)).